The sequence spans 145 residues: uncharacterized protein (145 aa).

The N-terminal stretch at M1–G26 is a signal peptide.

This is an uncharacterized protein from Saccharomyces cerevisiae (strain ATCC 204508 / S288c) (Baker's yeast).